Reading from the N-terminus, the 253-residue chain is GTP cyclohydrolase 1 type 2 homolog (253 aa).

Positions 64, 65, 101, 222, and 226 each coordinate a divalent metal cation.

Belongs to the GTP cyclohydrolase I type 2/NIF3 family. In terms of assembly, homohexamer.

The polypeptide is GTP cyclohydrolase 1 type 2 homolog (Halobacterium salinarum (strain ATCC 700922 / JCM 11081 / NRC-1) (Halobacterium halobium)).